Reading from the N-terminus, the 307-residue chain is Probable GTP 3',8-cyclase (307 aa).

One can recognise a Radical SAM core domain in the interval 4–222 (ALGREVRSVR…RTFHSREVYR (219 aa)). Position 13 (R13) interacts with GTP. [4Fe-4S] cluster-binding residues include C20 and C24. Y26 contacts S-adenosyl-L-methionine. C27 is a binding site for [4Fe-4S] cluster. GTP is bound at residue K60. The S-adenosyl-L-methionine site is built by G64 and S112. K150 contributes to the GTP binding site. The [4Fe-4S] cluster site is built by C240 and C243. Position 245-247 (245-247 (RIR)) interacts with GTP. Residue C257 coordinates [4Fe-4S] cluster.

It belongs to the radical SAM superfamily. MoaA family. [4Fe-4S] cluster serves as cofactor.

The catalysed reaction is GTP + AH2 + S-adenosyl-L-methionine = (8S)-3',8-cyclo-7,8-dihydroguanosine 5'-triphosphate + 5'-deoxyadenosine + L-methionine + A + H(+). It participates in cofactor biosynthesis; molybdopterin biosynthesis. Its function is as follows. Catalyzes the cyclization of GTP to (8S)-3',8-cyclo-7,8-dihydroguanosine 5'-triphosphate. This is Probable GTP 3',8-cyclase from Methanopyrus kandleri (strain AV19 / DSM 6324 / JCM 9639 / NBRC 100938).